Consider the following 251-residue polypeptide: Hydroxyacylglutathione hydrolase (251 aa).

Zn(2+) is bound by residues histidine 53, histidine 55, aspartate 57, histidine 58, histidine 110, aspartate 127, and histidine 165.

It belongs to the metallo-beta-lactamase superfamily. Glyoxalase II family. In terms of assembly, monomer. Zn(2+) is required as a cofactor.

The catalysed reaction is an S-(2-hydroxyacyl)glutathione + H2O = a 2-hydroxy carboxylate + glutathione + H(+). It participates in secondary metabolite metabolism; methylglyoxal degradation; (R)-lactate from methylglyoxal: step 2/2. Thiolesterase that catalyzes the hydrolysis of S-D-lactoyl-glutathione to form glutathione and D-lactic acid. This Escherichia coli (strain 55989 / EAEC) protein is Hydroxyacylglutathione hydrolase.